The following is a 251-amino-acid chain: Large ribosomal subunit protein uL3 (251 aa).

Gln151 is modified (N5-methylglutamine). The segment at 219–251 is disordered; it reads PGAFRRNGEEAAAAPAAEAPAETPAEEAGQEGA. A compositionally biased stretch (low complexity) spans 228–241; the sequence is EAAAAPAAEAPAET. Acidic residues predominate over residues 242–251; the sequence is PAEEAGQEGA.

It belongs to the universal ribosomal protein uL3 family. As to quaternary structure, part of the 50S ribosomal subunit. Forms a cluster with proteins L14 and L19. Post-translationally, methylated by PrmB.

Functionally, one of the primary rRNA binding proteins, it binds directly near the 3'-end of the 23S rRNA, where it nucleates assembly of the 50S subunit. The polypeptide is Large ribosomal subunit protein uL3 (Parvibaculum lavamentivorans (strain DS-1 / DSM 13023 / NCIMB 13966)).